The primary structure comprises 437 residues: tRNA pseudouridine synthase Pus10 (437 aa).

In terms of domain architecture, THUMP spans 76 to 198 (VARDVVEHLS…GGGVDIQVNS (123 aa)). Asp-253 (nucleophile) is an active-site residue. 2 residues coordinate substrate: Tyr-321 and Tyr-394.

This sequence belongs to the pseudouridine synthase Pus10 family.

The enzyme catalyses uridine(54) in tRNA = pseudouridine(54) in tRNA. The catalysed reaction is uridine(55) in tRNA = pseudouridine(55) in tRNA. Its function is as follows. Responsible for synthesis of pseudouridine from uracil-54 and uracil-55 in the psi GC loop of transfer RNAs. This Aeropyrum pernix (strain ATCC 700893 / DSM 11879 / JCM 9820 / NBRC 100138 / K1) protein is tRNA pseudouridine synthase Pus10.